Reading from the N-terminus, the 86-residue chain is Teretoxin Tsu6.16 (86 aa).

The N-terminal stretch at 1–21 (MATSGRLLCVCLVMGLVFESL) is a signal peptide. Positions 22 to 46 (GYLTGREKRPAENLEASVQRRWYLN) are excised as a propeptide.

This sequence belongs to the teretoxin M (TM) superfamily. Contains 3 disulfide bonds. As to expression, expressed by the venom duct.

The protein localises to the secreted. This Terebra subulata (Chocolate spotted auger) protein is Teretoxin Tsu6.16.